The chain runs to 1135 residues: Potassium channel subfamily T member 2 (1135 aa).

At 1 to 63 (MVDLESEVPP…KNQRSSLRIR (63 aa)) the chain is on the cytoplasmic side. A helical transmembrane segment spans residues 64-84 (LFNFSLKLLSCLLYIIRVLLE). Over 85-101 (NPSQGNEWSHIFWVNRS) the chain is Extracellular. The N-linked (GlcNAc...) asparagine glycan is linked to asparagine 99. The chain crosses the membrane as a helical span at residues 102-122 (LPLWGLQVSVALISLFETILL). The Cytoplasmic segment spans residues 123–137 (GYLSYKGNIWEQILR). Residues 138-158 (IPFILEIINAVPFIISIFWPS) form a helical membrane-spanning segment. Residues 159-164 (LRNLFV) lie on the Extracellular side of the membrane. The chain crosses the membrane as a helical span at residues 165 to 185 (PVFLNCWLAKHALENMINDLH). Residues 186–198 (RAIQRTQSAMFNQ) lie on the Cytoplasmic side of the membrane. A helical membrane pass occupies residues 199–219 (VLILISTLLCLIFTCICGIQH). Topologically, residues 220–228 (LERIGKKLN) are extracellular. The pore-forming intramembrane region spans 229-249 (LFDSLYFCIVTFSTVGFGDVT). Residues 250–256 (PETWSSK) lie on the Extracellular side of the membrane. The chain crosses the membrane as a helical span at residues 257–277 (LFVVAMICVALVVLPIQFEQL). At 278 to 1135 (AYLWMERQKS…GQDSREETQL (858 aa)) the chain is on the cytoplasmic side. 2 RCK N-terminal domains span residues 299–435 (EKHV…DHVV) and 718–858 (NKLI…CYSL). Disordered stretches follow at residues 977 to 1010 (VEEWEDTKDSKEQGHHRSNHRNSTSSDQSDHPLL), 1017 to 1036 (WARRLSRKGPKHSGKTAEKI), and 1113 to 1135 (SEPSRRNSICNVTGQDSREETQL). Residues 1017 to 1030 (WARRLSRKGPKHSG) are compositionally biased toward basic residues. A compositionally biased stretch (polar residues) spans 1118 to 1127 (RNSICNVTGQ).

The protein belongs to the potassium channel family. Calcium-activated (TC 1.A.1.3) subfamily. KCa4.2/KCNT2 sub-subfamily. As to quaternary structure, homotetramer. Forms heteromeric channels with KCNT1; these heterodimer channels differ from the homomers in their unitary conductance, kinetic behavior, subcellular localization, and response to activation of protein kinase C. In terms of processing, phosphorylated by protein kinase C. Phosphorylation of the C-terminal domain inhibits channel activity.

It localises to the cell membrane. It catalyses the reaction K(+)(in) = K(+)(out). Are normally in a closed state unless activated by an increase in intracellular Na(+) and Cl(-). Inhibited upon stimulation of G-protein coupled receptors, such as CHRM1 and GRM1. There is conflicting data about the effect of ATP on KNCT2 channels activity. Intracellular ATP was initially report to inhibit the channel activity. However, others studies conclude that KNCT2 channels are not inhibited by intracellular ATP. Its function is as follows. Sodium-activated and chloride-activated potassium channel. Produces rapidly activating outward rectifier K(+) currents. Contributes to regulate neuronal excitability. This chain is Potassium channel subfamily T member 2 (KCNT2), found in Homo sapiens (Human).